The primary structure comprises 60 residues: Large ribosomal subunit protein bL32 (60 aa).

Residues 1–21 are disordered; it reads MAVPARHTSKAKKNKRRTHYK. Residues 7–20 are compositionally biased toward basic residues; it reads HTSKAKKNKRRTHY.

Belongs to the bacterial ribosomal protein bL32 family.

The chain is Large ribosomal subunit protein bL32 from Streptococcus equi subsp. zooepidemicus (strain H70).